A 141-amino-acid polypeptide reads, in one-letter code: ATP synthase epsilon chain (141 aa).

Belongs to the ATPase epsilon chain family. In terms of assembly, F-type ATPases have 2 components, CF(1) - the catalytic core - and CF(0) - the membrane proton channel. CF(1) has five subunits: alpha(3), beta(3), gamma(1), delta(1), epsilon(1). CF(0) has three main subunits: a, b and c.

Its subcellular location is the cell inner membrane. Functionally, produces ATP from ADP in the presence of a proton gradient across the membrane. This Azoarcus sp. (strain BH72) protein is ATP synthase epsilon chain.